We begin with the raw amino-acid sequence, 108 residues long: Parvalbumin alpha (108 aa).

Position 1 is an N-acetylalanine (A1). EF-hand domains follow at residues 37–72 (MSAN…FAAD) and 76–108 (LTDA…VHEA). Positions 50, 52, 54, 56, 58, 61, 89, 91, 93, 95, and 100 each coordinate Ca(2+).

The protein belongs to the parvalbumin family.

In muscle, parvalbumin is thought to be involved in relaxation after contraction. It binds two calcium ions. The polypeptide is Parvalbumin alpha (Esox lucius (Northern pike)).